The sequence spans 346 residues: Peripherin-2 (346 aa).

Topologically, residues 1-18 (MALLKVKFDQKKRVKLAQ) are cytoplasmic. The helical transmembrane segment at 19–41 (GLWLMNWFSVLAGIIIFGLGLFL) threads the bilayer. Topologically, residues 42–62 (KIELRKRSDVMNNSESHFVPN) are lumenal. N-linked (GlcNAc...) asparagine glycosylation is present at Asn53. A helical membrane pass occupies residues 63–79 (SLIGVGVLSCVFNSLAG). The Cytoplasmic segment spans residues 80–101 (KICYDALDPAKYAKWKPWLKPY). A helical membrane pass occupies residues 102-122 (LAVCVLFNVVLFLVALCCFLL). The Lumenal portion of the chain corresponds to 123–264 (RGSLESTLAH…LSYYSNLMNT (142 aa)). N-linked (GlcNAc...) asparagine glycosylation is found at Asn229 and Asn263. The helical transmembrane segment at 265–283 (TGAVTLLVWLFEVTITVGL) threads the bilayer. At 284–346 (RYLHTALEGM…EDAGQAPAAG (63 aa)) the chain is on the cytoplasmic side. The tract at residues 341–346 (QAPAAG) is interaction with MREG.

It belongs to the PRPH2/ROM1 family. In terms of assembly, homodimer; disulfide-linked. Forms a homotetramer. Forms a heterotetramer with ROM1. Homotetramer and heterotetramer core complexes go on to form higher order complexes by formation of intermolecular disulfide bonds. Interacts with MREG. Interacts with STX3. Interacts with SNAP25. As to expression, retina (photoreceptor). In rim region of ROS (rod outer segment) disks.

Its subcellular location is the membrane. It is found in the cell projection. The protein resides in the cilium. The protein localises to the photoreceptor outer segment. It localises to the photoreceptor inner segment. In terms of biological role, essential for retina photoreceptor outer segment disk morphogenesis, may also play a role with ROM1 in the maintenance of outer segment disk structure. Required for the maintenance of retinal outer nuclear layer thickness. Required for the correct development and organization of the photoreceptor inner segment. The chain is Peripherin-2 (PRPH2) from Bos taurus (Bovine).